Here is a 242-residue protein sequence, read N- to C-terminus: Ribonuclease PH (242 aa).

Residues Arg-89 and 127-129 contribute to the phosphate site; that span reads GTR.

Belongs to the RNase PH family. As to quaternary structure, homohexameric ring arranged as a trimer of dimers.

The enzyme catalyses tRNA(n+1) + phosphate = tRNA(n) + a ribonucleoside 5'-diphosphate. Functionally, phosphorolytic 3'-5' exoribonuclease that plays an important role in tRNA 3'-end maturation. Removes nucleotide residues following the 3'-CCA terminus of tRNAs; can also add nucleotides to the ends of RNA molecules by using nucleoside diphosphates as substrates, but this may not be physiologically important. Probably plays a role in initiation of 16S rRNA degradation (leading to ribosome degradation) during starvation. The chain is Ribonuclease PH from Neisseria meningitidis serogroup B (strain ATCC BAA-335 / MC58).